Reading from the N-terminus, the 423-residue chain is MILIKNGHIVDPQNNLNDKFDILIEKGEIKKIEKNIQPFAGCEVIDAEGKIITPSFTDIHVHFRDPGQTYKEDIESGSKAAVAGGYTTVVCMPNTIPAIDDVPIVRYIIEKGEEIGLCRVLPSAAITKGRKGKELTEMALLKDAGAVYFTDDGAPVMDSFIMRKAMEYAGSLGTFVADHCEDLNLSQNGVAHEGEIAAALGLPPLPPEAEDTMVARDCILSIQTGMPVHICHISTKLSVEIVAWAKAMGAKVTAEVTPHHLYLTDEEFLDFSCIAKVSPPLRTHEDIEATRWALASGIIDFVATDHAPHAHYEKMQELQACPPGMLGLQFALPIVLELVKKDYFDLNRMVEVMSIQPAKKIGLKPPQIKEGEIAELTIFDPFETWEVNKETILSKSKNTPLLGRKLTGKVKYTFFKGKIVYRD.

Zn(2+) contacts are provided by histidine 60 and histidine 62. Substrate-binding positions include 62 to 64 (HFR) and asparagine 94. Zn(2+)-binding residues include aspartate 152, histidine 179, histidine 232, and aspartate 305. Aspartate 305 is a catalytic residue. Substrate is bound by residues histidine 309 and 323-324 (PG).

The protein belongs to the metallo-dependent hydrolases superfamily. DHOase family. Class I DHOase subfamily. Zn(2+) is required as a cofactor.

The enzyme catalyses (S)-dihydroorotate + H2O = N-carbamoyl-L-aspartate + H(+). Its pathway is pyrimidine metabolism; UMP biosynthesis via de novo pathway; (S)-dihydroorotate from bicarbonate: step 3/3. Functionally, catalyzes the reversible cyclization of carbamoyl aspartate to dihydroorotate. The sequence is that of Dihydroorotase from Sulfurihydrogenibium sp. (strain YO3AOP1).